The chain runs to 405 residues: Argininosuccinate synthase (405 aa).

Residue 12-20 participates in ATP binding; that stretch reads AYSGGLDTS. L-citrulline-binding residues include Tyr90 and Ser95. Gly120 contacts ATP. L-aspartate-binding residues include Thr122, Asn126, and Asp127. Asn126 contributes to the L-citrulline binding site. Residues Arg130, Ser179, Ser188, Glu265, and Tyr277 each coordinate L-citrulline.

This sequence belongs to the argininosuccinate synthase family. Type 1 subfamily. As to quaternary structure, homotetramer.

It localises to the cytoplasm. It carries out the reaction L-citrulline + L-aspartate + ATP = 2-(N(omega)-L-arginino)succinate + AMP + diphosphate + H(+). It participates in amino-acid biosynthesis; L-arginine biosynthesis; L-arginine from L-ornithine and carbamoyl phosphate: step 2/3. The polypeptide is Argininosuccinate synthase (Clostridium perfringens (strain 13 / Type A)).